Reading from the N-terminus, the 1573-residue chain is Synaptojanin-1 (1573 aa).

In terms of domain architecture, SAC spans 119–442; that stretch reads VRKVLNSGNF…GDSISKIYAG (324 aa). Residues 500–899 form a catalytic region; sequence GSLRVSEQTL…GPPDGTVLVS (400 aa). A phosphoserine mark is found at S820 and S830. Positions 902–971 constitute an RRM domain; it reads SSLPENNFFD…RTITIALKSP (70 aa). The segment covering 1029-1054 has biased composition (low complexity); it reads HLQPSSSSGLGTSPSSSPRTSPCQSP. 4 disordered regions span residues 1029-1322, 1341-1360, 1370-1463, and 1535-1573; these read HLQP…PLKI, SVQTSPVPTPDPKRLIQLPS, VSCM…GFKD, and SRRPPPPPVPLLPPGTSPPVDPFTTLASKASPTLDFTER. Residue S1053 is modified to Phosphoserine. Positions 1108 to 1130 are enriched in pro residues; the sequence is PPPPRPVAPPTRPAPPQRPPPPS. S1150 and S1178 each carry phosphoserine. R1201 bears the Omega-N-methylarginine mark. T1220 is modified (phosphothreonine). Residues 1221-1234 show a composition bias toward polar residues; that stretch reads PESQSKTSETSKGS. Phosphoserine is present on S1292. The segment covering 1293 to 1304 has biased composition (low complexity); that stretch reads SHSLPSEASSQP. Residues 1313-1322 are compositionally biased toward basic and acidic residues; the sequence is DGKRESPLKI. Residues S1318 and S1345 each carry the phosphoserine modification. Position 1349 is a phosphothreonine (T1349). Residues 1382–1407 are compositionally biased toward polar residues; sequence RSQSQENMRSSPNPFITGLTRTNPFS. A run of 3 repeats spans residues 1396–1398, 1406–1408, and 1417–1419. Positions 1396–1419 are 3 X 3 AA repeats of N-P-F; that stretch reads FITGLTRTNPFSDRTAAPGNPFRA. Over residues 1536 to 1555 the composition is skewed to pro residues; the sequence is RRPPPPPVPLLPPGTSPPVD. Residues S1551 and S1565 each carry the phosphoserine modification.

This sequence belongs to the synaptojanin family. The protein in the central section; belongs to the inositol 1,4,5-trisphosphate 5-phosphatase family. Interacts with ASH/GRB2. Interacts with PACSIN1, PACSIN2 and PACSIN3. Interacts with AMPH, SH3GL1, SH3GL2 and SH3GL3. Interacts with MYO1E (via SH3 domain). Interacts with BIN1 and DNM1. Interacts with EPS15.

The protein resides in the cytoplasm. It localises to the perinuclear region. The catalysed reaction is a 1,2-diacyl-sn-glycero-3-phospho-(1D-myo-inositol-4,5-bisphosphate) + H2O = a 1,2-diacyl-sn-glycero-3-phospho-(1D-myo-inositol 4-phosphate) + phosphate. Phosphatase that acts on various phosphoinositides, including phosphatidylinositol 4-phosphate, phosphatidylinositol (4,5)-bisphosphate and phosphatidylinositol (3,4,5)-trisphosphate. Has a role in clathrin-mediated endocytosis. Hydrolyzes PIP2 bound to actin regulatory proteins resulting in the rearrangement of actin filaments downstream of tyrosine kinase and ASH/GRB2. In Homo sapiens (Human), this protein is Synaptojanin-1 (SYNJ1).